Here is a 527-residue protein sequence, read N- to C-terminus: Splicing factor MUD2 (527 aa).

Residues 36 to 169 are disordered; the sequence is DNAVIDTHFK…SKFNGDRDKR (134 aa). Residues 42-55 are compositionally biased toward basic and acidic residues; it reads THFKRQKSDGELPK. The residue at position 49 (Ser49) is a Phosphoserine. Over residues 60-85 the composition is skewed to polar residues; sequence RNVSHSNNRGPSSIITMSTNRTTYEQ. The span at 94 to 109 shows a compositional bias: basic and acidic residues; sequence SYRDASGRSYNRENRY. Residues 110–122 show a composition bias toward polar residues; that stretch reads SSHNTGPQWNNNP. Composition is skewed to basic and acidic residues over residues 125 to 141 and 155 to 169; these read RQRD…DRRG and RKNE…RDKR. An RRM domain is found at 424-511; the sequence is LLLLNCLDPL…QFNDRTVLCT (88 aa).

As to quaternary structure, MSL5, MUD2 and PRP40 interact to form the commitment complex 2 (CC2), a precursor of mature spliceosomes.

Splicing factor that contacts pre-mRNA directly and is a component of the pre-mRNA-U1 snRNP complex (commitment complex 2) that forms during early spliceosome assembly in yeast extracts. This chain is Splicing factor MUD2 (MUD2), found in Saccharomyces cerevisiae (strain ATCC 204508 / S288c) (Baker's yeast).